Here is a 304-residue protein sequence, read N- to C-terminus: Glutaminase (304 aa).

Residues serine 63, asparagine 114, glutamate 158, asparagine 165, tyrosine 189, tyrosine 240, and valine 258 each coordinate substrate.

It belongs to the glutaminase family. Homotetramer.

The enzyme catalyses L-glutamine + H2O = L-glutamate + NH4(+). This chain is Glutaminase, found in Shewanella amazonensis (strain ATCC BAA-1098 / SB2B).